Reading from the N-terminus, the 1187-residue chain is uncharacterized protein (1187 aa).

The span at 38–57 (KNNQDIPTSNTNISPKPISQ) shows a compositional bias: polar residues. 8 disordered regions span residues 38 to 127 (KNNQ…NSPT), 189 to 215 (ISRS…IHLN), 248 to 287 (TQPP…SQLQ), 358 to 415 (NNNS…NSNS), 443 to 490 (FPNN…INNN), 536 to 689 (QFPF…SSLN), 752 to 840 (SINN…NKSI), and 1079 to 1187 (HNNN…NLQK). Low complexity-rich tracts occupy residues 71–84 (KPIV…STLI), 104–124 (PSSS…SIPN), 190–215 (SRSS…IHLN), and 248–274 (TQPP…QAPH). Residues 443–455 (FPNNTDENYPSDH) show a composition bias toward polar residues. 6 stretches are compositionally biased toward low complexity: residues 458–490 (NDNN…INNN), 543–570 (TTES…SSSA), 585–653 (INNL…SNIN), 662–689 (PNSP…SSLN), 752–790 (SINN…TTNN), and 797–809 (NYKI…NIDN). Over residues 815 to 832 (NDDDNDDDDDDDVDDNDD) the composition is skewed to acidic residues. 2 stretches are compositionally biased toward low complexity: residues 1079 to 1149 (HNNN…PSNN) and 1156 to 1174 (KNNN…NNTN).

This is an uncharacterized protein from Dictyostelium discoideum (Social amoeba).